Here is a 524-residue protein sequence, read N- to C-terminus: GMP synthase [glutamine-hydrolyzing] (524 aa).

A Glutamine amidotransferase type-1 domain is found at 8-206 (RILILDFGSQ…IYDICGCEAL (199 aa)). The Nucleophile role is filled by Cys-85. Active-site residues include His-180 and Glu-182. One can recognise a GMPS ATP-PPase domain in the interval 207–399 (WEPRHIIAKS…LGLPFELVYR (193 aa)). 234–240 (SGGVDSS) contacts ATP.

In terms of assembly, homodimer.

The catalysed reaction is XMP + L-glutamine + ATP + H2O = GMP + L-glutamate + AMP + diphosphate + 2 H(+). Its pathway is purine metabolism; GMP biosynthesis; GMP from XMP (L-Gln route): step 1/1. Functionally, catalyzes the synthesis of GMP from XMP. This is GMP synthase [glutamine-hydrolyzing] from Nitrosococcus oceani (strain ATCC 19707 / BCRC 17464 / JCM 30415 / NCIMB 11848 / C-107).